The following is a 989-amino-acid chain: Phosphoenolpyruvate carboxylase (989 aa).

Catalysis depends on residues histidine 175 and lysine 630.

This sequence belongs to the PEPCase type 1 family. The cofactor is Mg(2+).

It catalyses the reaction oxaloacetate + phosphate = phosphoenolpyruvate + hydrogencarbonate. Its function is as follows. Forms oxaloacetate, a four-carbon dicarboxylic acid source for the tricarboxylic acid cycle. This Prochlorococcus marinus (strain MIT 9312) protein is Phosphoenolpyruvate carboxylase.